Consider the following 135-residue polypeptide: Ribonuclease P protein component (135 aa).

This sequence belongs to the RnpA family. As to quaternary structure, consists of a catalytic RNA component (M1 or rnpB) and a protein subunit.

The enzyme catalyses Endonucleolytic cleavage of RNA, removing 5'-extranucleotides from tRNA precursor.. Its function is as follows. RNaseP catalyzes the removal of the 5'-leader sequence from pre-tRNA to produce the mature 5'-terminus. It can also cleave other RNA substrates such as 4.5S RNA. The protein component plays an auxiliary but essential role in vivo by binding to the 5'-leader sequence and broadening the substrate specificity of the ribozyme. In Pseudomonas aeruginosa (strain LESB58), this protein is Ribonuclease P protein component.